The primary structure comprises 243 residues: Proteasome subunit beta (243 aa).

The tract at residues M1–D40 is disordered. The propeptide at M1 to G49 is removed in mature form; by autocatalysis. T50 acts as the Nucleophile in catalysis.

Belongs to the peptidase T1B family. In terms of assembly, the 20S proteasome core is composed of 14 alpha and 14 beta subunits that assemble into four stacked heptameric rings, resulting in a barrel-shaped structure. The two inner rings, each composed of seven catalytic beta subunits, are sandwiched by two outer rings, each composed of seven alpha subunits. The catalytic chamber with the active sites is on the inside of the barrel. Has a gated structure, the ends of the cylinder being occluded by the N-termini of the alpha-subunits. Is capped at one or both ends by the proteasome regulatory ATPase, PAN.

The protein localises to the cytoplasm. It carries out the reaction Cleavage of peptide bonds with very broad specificity.. Its activity is regulated as follows. The formation of the proteasomal ATPase PAN-20S proteasome complex, via the docking of the C-termini of PAN into the intersubunit pockets in the alpha-rings, triggers opening of the gate for substrate entry. Interconversion between the open-gate and close-gate conformations leads to a dynamic regulation of the 20S proteasome proteolysis activity. Its function is as follows. Component of the proteasome core, a large protease complex with broad specificity involved in protein degradation. This is Proteasome subunit beta from Haloquadratum walsbyi (strain DSM 16790 / HBSQ001).